Reading from the N-terminus, the 101-residue chain is MDKSKRPFRKSKRSFRRRLPPIGSGDRIDYRNMSLISRFISEQGKILSRRVNRLTLKQQRLITIAIKQARILSSLPFLNNEKQFERTESIPRATGPRTRNK.

The segment covering 1–19 (MDKSKRPFRKSKRSFRRRL) has biased composition (basic residues). Residues 1-23 (MDKSKRPFRKSKRSFRRRLPPIG) are disordered.

This sequence belongs to the bacterial ribosomal protein bS18 family. Part of the 30S ribosomal subunit.

It is found in the plastid. It localises to the chloroplast. The chain is Small ribosomal subunit protein bS18c from Ceratophyllum demersum (Rigid hornwort).